The following is a 1087-amino-acid chain: MEGESTESTHNTKVSDSAYSNSCSNSQSQRSGSSKSRLSGSHSSGSSGYGGKPSTQASSSDMAVKRNKDKSRKKKKAKSPAQATAATTTTIKSLEQTEEPLLVKPNNGSCEQQLELQDAQQLGAPTPSDAHDAHGDKPQLDVDEQQDDPQAEQIQQLETATAATISPDTMSASVTVTIDGCTSMEKTCEWTDRPGRLEAHAACIGKQHVQQQQHDRVKEDSFCCVISMHDGVVLFTTANLNEMLGYPREMWLGRSFIDFVHIKDRATFASQITTGIPIAESRCSQSKDARTTFCVMLRRYRGLASGGFGIIGRPVSYAPFRLGLTFREAPEEVQPDGCTLSNATSMLLVISATPIKSCYKEPDEFLSPKGPKFAIQHTAAGIISHVDTAAVSALGYLPQDLIGRSILDFYHHEDLSDIKDIYEKVVKKGQTVGATFCSKPFRFLIQNGCYILLETEWTSFVNPWSRKLEFVVGHHRVFQGPKQCDVFEMSPNVTPNIPEDEQNRNACIKEDILKMMTETVTRPSDTVKQEVSRRCQALASFMETLMDEVARGDLKLDLPHETELTVSERDSVMLGEISPHHDYYDSKSSTETPPSYNQLNYNENLLRFFNSKPVTAPVDTDPPKMDSSYVSSAREDALSPVHGFEGSGGSGSSGNLTTASNVRMSSVTNTSNTGTGTSGGENSASGSSNPLPVNMTLTEILLNKHNDEMEKCMLKKHRESRGRTGDKTKKSVIEKMPEYSGPGHGQTMKRGGSHSWEGDANKPKQQLTLSAVVVAPTVSVSPAEDSQTTAKWQAPMTGSHLFQSSYNFPQSINLWPPFSLGLTTPTVHTTHTSMAQKSFSPQHNLFPAFYYIPAPLATATAGSAAAQTSVSSASAAQHSPKSSENPSTSQPEATAATAMPMPYMAGVMYPHPSLFYAYQPMPFPSVSGAVQMSVQSSGSQSNNNNKSIYTMAPASTTTQKPGAFHSITPAELNKPDAPDTLLHTETSPKISVQEAPKKELSDLPSTSARRGSSSDQRNNSNNPKKYTDSNGNSDDMDGSSFSSFYSSFIKTTDGSESPPDNEKETKVHKLKPIVEHPEEDQTQHGDG.

Polar residues predominate over residues 1–14; the sequence is MEGESTESTHNTKV. 2 disordered regions span residues 1 to 98 and 123 to 153; these read MEGE…EQTE and GAPT…QAEQ. The span at 15-46 shows a compositional bias: low complexity; sequence SDSAYSNSCSNSQSQRSGSSKSRLSGSHSSGS. Positions 65–78 match the Nuclear localization signal motif; that stretch reads KRNKDKSRKKKKAK. The segment covering 65–78 has biased composition (basic residues); sequence KRNKDKSRKKKKAK. Over residues 79–93 the composition is skewed to low complexity; sequence SPAQATAATTTTIKS. Over residues 129 to 140 the composition is skewed to basic and acidic residues; that stretch reads DAHDAHGDKPQL. A compositionally biased stretch (acidic residues) spans 141–150; sequence DVDEQQDDPQ. 2 PAS domains span residues 220-355 and 373-479; these read DSFC…ATPI and FAIQ…RVFQ. Disordered regions lie at residues 613-692, 736-759, 871-893, and 956-1087; these read PVTA…NPLP, MPEY…WEGD, SSAS…QPEA, and TTTQ…HGDG. Over residues 655–664 the composition is skewed to polar residues; the sequence is NLTTASNVRM. Residues 665 to 689 show a composition bias toward low complexity; that stretch reads SSVTNTSNTGTGTSGGENSASGSSN. 2 stretches are compositionally biased toward polar residues: residues 877 to 892 and 1003 to 1024; these read QHSP…SQPE and LPST…NNPK. The segment covering 1028–1047 has biased composition (low complexity); it reads DSNGNSDDMDGSSFSSFYSS. The segment covering 1060-1087 has biased composition (basic and acidic residues); sequence DNEKETKVHKLKPIVEHPEEDQTQHGDG.

Forms a heterodimer with timeless (TIM); the complex then translocates into the nucleus. Phosphorylated with a circadian rhythmicity, probably by the double-time protein (dbt). Phosphorylation could be implicated in the stability of per monomer and in the formation of heterodimer per-tim.

It is found in the nucleus. It localises to the cytoplasm. The protein resides in the perinuclear region. Essential for biological clock functions. Determines the period length of circadian and ultradian rhythms; an increase in PER dosage leads to shortened circadian rhythms and a decrease leads to lengthened circadian rhythms. Essential for the circadian rhythmicity of locomotor activity, eclosion behavior, and for the rhythmic component of the male courtship song that originates in the thoracic nervous system. The biological cycle depends on the rhythmic formation and nuclear localization of the TIM-PER complex. Light induces the degradation of TIM, which promotes elimination of PER. Nuclear activity of the heterodimer coordinatively regulates PER and TIM transcription through a negative feedback loop. Behaves as a negative element in circadian transcriptional loop. Does not appear to bind DNA, suggesting indirect transcriptional inhibition. The chain is Period circadian protein (per) from Drosophila virilis (Fruit fly).